A 792-amino-acid polypeptide reads, in one-letter code: Ribonucleoside-diphosphate reductase large subunit (792 aa).

The ATP-cone domain occupies 1–92; the sequence is MHVIKRDGRQ…VSNLHKETKK (92 aa). ATP is bound by residues 5-6, 11-17, Thr-53, and Asp-57; these read KR and ERVMFDK. Residue Lys-17 is modified to N6-acetyllysine. 2 residues coordinate GDP: Ser-202 and Ser-217. A disulfide bridge connects residues Cys-218 and Cys-444. DTTP is bound by residues 226–228, Lys-243, Arg-256, and 263–264; these read DSI and AG. Lys-376 bears the N6-acetyllysine mark. Asn-427 contributes to the GDP binding site. The active-site Proton acceptor is Asn-427. The Cysteine radical intermediate role is filled by Cys-429. GDP contacts are provided by residues Glu-431 and 604 to 607; that span reads TAST. Glu-431 (proton acceptor) is an active-site residue. Residue Thr-751 is modified to Phosphothreonine.

The protein belongs to the ribonucleoside diphosphate reductase large chain family. In terms of assembly, heterodimer of a large and a small subunit. Interacts with RRM2B. Interacts with AHCYL1 which inhibits its activity.

The protein resides in the cytoplasm. It catalyses the reaction a 2'-deoxyribonucleoside 5'-diphosphate + [thioredoxin]-disulfide + H2O = a ribonucleoside 5'-diphosphate + [thioredoxin]-dithiol. With respect to regulation, under complex allosteric control mediated by deoxynucleoside triphosphates and ATP binding to separate specificity and activation sites on the M1 subunit. The type of nucleotide bound at the specificity site determines substrate preference. It seems probable that ATP makes the enzyme reduce CDP and UDP, dGTP favors ADP reduction and dTTP favors GDP reduction. Stimulated by ATP and inhibited by dATP binding to the activity site, the dATP inhibition is mediated by AHCYL1 which stabilizes dATP in the site. In terms of biological role, provides the precursors necessary for DNA synthesis. Catalyzes the biosynthesis of deoxyribonucleotides from the corresponding ribonucleotides. In Mus musculus (Mouse), this protein is Ribonucleoside-diphosphate reductase large subunit (Rrm1).